The primary structure comprises 124 residues: Small ribosomal subunit protein uS12 (124 aa).

The residue at position 89 (Asp89) is a 3-methylthioaspartic acid. The segment at 104–124 (TAGVKDRRQSRSKYGAKAPKE) is disordered.

This sequence belongs to the universal ribosomal protein uS12 family. Part of the 30S ribosomal subunit. Contacts proteins S8 and S17. May interact with IF1 in the 30S initiation complex.

Its function is as follows. With S4 and S5 plays an important role in translational accuracy. Functionally, interacts with and stabilizes bases of the 16S rRNA that are involved in tRNA selection in the A site and with the mRNA backbone. Located at the interface of the 30S and 50S subunits, it traverses the body of the 30S subunit contacting proteins on the other side and probably holding the rRNA structure together. The combined cluster of proteins S8, S12 and S17 appears to hold together the shoulder and platform of the 30S subunit. In Synechococcus sp. (strain CC9605), this protein is Small ribosomal subunit protein uS12.